Consider the following 406-residue polypeptide: Succinylornithine transaminase (406 aa).

The residue at position 252 (Lys-252) is an N6-(pyridoxal phosphate)lysine.

Belongs to the class-III pyridoxal-phosphate-dependent aminotransferase family. AstC subfamily. Pyridoxal 5'-phosphate is required as a cofactor.

The catalysed reaction is N(2)-succinyl-L-ornithine + 2-oxoglutarate = N-succinyl-L-glutamate 5-semialdehyde + L-glutamate. The protein operates within amino-acid degradation; L-arginine degradation via AST pathway; L-glutamate and succinate from L-arginine: step 3/5. Catalyzes the transamination of N(2)-succinylornithine and alpha-ketoglutarate into N(2)-succinylglutamate semialdehyde and glutamate. Can also act as an acetylornithine aminotransferase. This chain is Succinylornithine transaminase, found in Escherichia coli (strain 55989 / EAEC).